Consider the following 377-residue polypeptide: CaM kinase-like vesicle-associated protein (377 aa).

A Protein kinase domain is found at 24–287 (YDLGQLIKTE…AADAISHEWI (264 aa)). The tract at residues 324–377 (MKRLRAPEQTDPGTPSPSKDSDKTPSMATPAPSPANTPAEGAPSLPCPSPDTTG) is disordered. Residues 347–362 (TPSMATPAPSPANTPA) are compositionally biased toward low complexity. Residues 368–377 (LPCPSPDTTG) are compositionally biased toward pro residues.

The protein belongs to the protein kinase superfamily. CAMK Ser/Thr protein kinase family. In terms of assembly, interacts with calmodulin, in the presence of calcium. It depends on Ca(2+) as a cofactor.

The protein localises to the cytoplasmic vesicle membrane. Does not appear to have detectable kinase activity. The chain is CaM kinase-like vesicle-associated protein (camkv) from Xenopus laevis (African clawed frog).